Reading from the N-terminus, the 200-residue chain is Peptidyl-tRNA hydrolase (200 aa).

Tyrosine 17 provides a ligand contact to tRNA. Catalysis depends on histidine 22, which acts as the Proton acceptor. The tRNA site is built by tyrosine 78, asparagine 80, and asparagine 126.

This sequence belongs to the PTH family. In terms of assembly, monomer.

It is found in the cytoplasm. It carries out the reaction an N-acyl-L-alpha-aminoacyl-tRNA + H2O = an N-acyl-L-amino acid + a tRNA + H(+). In terms of biological role, hydrolyzes ribosome-free peptidyl-tRNAs (with 1 or more amino acids incorporated), which drop off the ribosome during protein synthesis, or as a result of ribosome stalling. Functionally, catalyzes the release of premature peptidyl moieties from peptidyl-tRNA molecules trapped in stalled 50S ribosomal subunits, and thus maintains levels of free tRNAs and 50S ribosomes. This Cutibacterium acnes (strain DSM 16379 / KPA171202) (Propionibacterium acnes) protein is Peptidyl-tRNA hydrolase.